Consider the following 98-residue polypeptide: NADH-ubiquinone oxidoreductase chain 4L (98 aa).

Transmembrane regions (helical) follow at residues Met1 to Met21, Ser29 to Leu49, and Met61 to Val81.

Belongs to the complex I subunit 4L family. Core subunit of respiratory chain NADH dehydrogenase (Complex I) which is composed of 45 different subunits.

It localises to the mitochondrion inner membrane. It carries out the reaction a ubiquinone + NADH + 5 H(+)(in) = a ubiquinol + NAD(+) + 4 H(+)(out). Its function is as follows. Core subunit of the mitochondrial membrane respiratory chain NADH dehydrogenase (Complex I) which catalyzes electron transfer from NADH through the respiratory chain, using ubiquinone as an electron acceptor. Part of the enzyme membrane arm which is embedded in the lipid bilayer and involved in proton translocation. This chain is NADH-ubiquinone oxidoreductase chain 4L (MT-ND4L), found in Dugong dugon (Dugong).